A 239-amino-acid chain; its full sequence is MVIKAQSPAGFAEEYIIESIWNNRFPPGTILPAERELSELIGVTRTTLREVLQRLARDGWLTIQHGKPTKVNNFWETSGLNILETVARLDHQSVPQLIDNLLSVRTNIAAIFIRAAVRNHPEAAQEVLAKATQVEDQADAFNLLDYEIFRGLAFASGNPIYGLIFNGLKGLYTRVGRYYFSNPESRKLALTFYSKLSTLCHEKSYDQVMDCVRNYGKDSGAIWQSMQGTMPSDLTEARR.

The HTH gntR-type domain maps to 6–74 (QSPAGFAEEY…HGKPTKVNNF (69 aa)). The segment at residues 34–53 (ERELSELIGVTRTTLREVLQ) is a DNA-binding region (H-T-H motif).

Homodimer.

The protein resides in the cytoplasm. Its function is as follows. Multifunctional regulator of fatty acid metabolism. The sequence is that of Fatty acid metabolism regulator protein from Serratia proteamaculans (strain 568).